A 34-amino-acid polypeptide reads, in one-letter code: Kappa-theraphotoxin-Sc1a (34 aa).

3 cysteine pairs are disulfide-bonded: C2-C16, C9-C21, and C15-C28. I34 carries the isoleucine amide modification.

This sequence belongs to the neurotoxin 10 (Hwtx-1) family. 57 (ScTx1) subfamily. As to expression, expressed by the venom gland.

The protein resides in the secreted. In terms of biological role, acts as a gating-modifier to inhibit voltage-gated potassium channels. It inhibits delayed Kv2.1/KCNB1 (IC(50) is 12.7 nM), Kv2.1/Kv9.3 (IC(50) is 7.2 nM) (KCNB1/KCNS3), Kv2.2/KCNB2 (IC(50) is 21.4 nM), and transient Kv4.2/KCND2 (IC(50) is 1.2 nM) channels. The polypeptide is Kappa-theraphotoxin-Sc1a (Stromatopelma calceatum (Featherleg baboon tarantula)).